Reading from the N-terminus, the 616-residue chain is MALLQISEPGLSAAPHQRRLAAGIDLGTTNSLVATVRSGQAETLADHDGRHLLPSVVHYQQQGHTVGYAARANAAQDTANTISSVKRMMGRSLADIQTRYPHLPYQFQASENGLPMIETAAGLLNPVRISADILKALAARATEALSGELDGVVITVPAYFDDAQRQGTKDAARLAGLHVLRLLNEPTAAAIAYGLDSGKEGVIAVYDLGGGTFDISILRLSRGVFEVLATGGDSALGGDDFDHLLADYIREQAGIADRSDNRVQRELLDAAIAAKIALSDADSVSVNVAGWQGDITREQFNDLIAALVKRTLMACRRALKDAGVEAQEVLEVVMVGGSTRVPLVRERVGEFFGRPPLTAIDPDKVVAIGAAIQADILVGNKPDSEMLLLDVIPLSLGLETMGGLVEKVIPRNTTIPVARAQDFTTFKDGQTAMSIHVMQGERELVQDCRSLARFALRGLPAMPAGGAHIRVTFQVDADGLLSVTAMEKSTGVEASIQVKPSYGLTDSEIATMIQDSMSFAEQDVKARMLAEQKVEAARVLESLTGALAADAALLSAAERQVIDDAAAHLSEVAQSDDGDAIEQAIKNVDKQTQEFAARRMDKSVRRALQGHSVDEV.

This sequence belongs to the heat shock protein 70 family.

In terms of biological role, chaperone involved in the maturation of iron-sulfur cluster-containing proteins. Has a low intrinsic ATPase activity which is markedly stimulated by HscB. Involved in the maturation of IscU. This Citrobacter koseri (strain ATCC BAA-895 / CDC 4225-83 / SGSC4696) protein is Chaperone protein HscA.